A 778-amino-acid chain; its full sequence is MDVEGGGGGGGGAPPRGRNSWGWQKGTLLLAYQSFGVVYGDLCISPVYVYKNTFSGKLRLHEEDEEILGVLSLVFWSLTLIPLLKYIILVLGADDNGEGGTFALYSLLCRNSKMGLLNNMRANHGSLSAYNKEEPCKESRNSMLIKAFFEKHYSLRVVLLLFVLMGTSMVIGDGVLTPTMSVLAAVSGLRIKFPELHENYTVLLACVILIGLFALQHYGTRRVGFLFAPILISWLTCIGGIGIYNIIKWNPSVIRALSPYYIYNFFRKAGKDGWSSLGGIVLCLTGAEAMFADLGHFSKLSLRLGFTIVVYPCLVLAYMGEAAYLSKHREDLQSSFYKALPDRVFWPVLFIATLATAVGSQAIISATFSIISQCRALGCFPRIKVVHTSSHVHGQIYIPEVNWVLMSLCLAVTIGFRDTEMIGNAYGLAVILVMCATTCLMFLVITTVWNRWVVWAAAFTVVFGSVELLYLSACLAKVPHGGWLPLLLSLTTLLVMSTWHYGTAMKQQHEVQNKVCLDHFLGLSSGIGLVRVPGVGFVYSSTTNGVPPMFAHFVTNFPAFHRVLIFVSLQTLAVPKVSPEERFLVGRIGSPANRLFRCIVRYGYKEGRWDHFNFENQLLMKVVEFLRHQDGSGGGGGDRMSAAASGEDEAMSVIPATSSSGGSNQHAFDAGTTTSSCEIDATAGGGGRRKVRFDNDGGGGGEEEEEAAEVKELMEEKEAGVSYMIGHTCVFAHESSSAVKKFAVNVVYGFLRRNSRRPAVVLGIPHTSLIEVGMAYRV.

At 1-28 (MDVEGGGGGGGGAPPRGRNSWGWQKGTL) the chain is on the cytoplasmic side. A helical membrane pass occupies residues 29-49 (LLAYQSFGVVYGDLCISPVYV). The Extracellular segment spans residues 50 to 72 (YKNTFSGKLRLHEEDEEILGVLS). The helical transmembrane segment at 73-93 (LVFWSLTLIPLLKYIILVLGA) threads the bilayer. Topologically, residues 94-156 (DDNGEGGTFA…AFFEKHYSLR (63 aa)) are cytoplasmic. A helical membrane pass occupies residues 157–177 (VVLLLFVLMGTSMVIGDGVLT). Residues 178 to 199 (PTMSVLAAVSGLRIKFPELHEN) lie on the Extracellular side of the membrane. N-linked (GlcNAc...) asparagine glycosylation occurs at N199. Residues 200-220 (YTVLLACVILIGLFALQHYGT) form a helical membrane-spanning segment. The Cytoplasmic portion of the chain corresponds to 221 to 222 (RR). The chain crosses the membrane as a helical span at residues 223–243 (VGFLFAPILISWLTCIGGIGI). Topologically, residues 244 to 276 (YNIIKWNPSVIRALSPYYIYNFFRKAGKDGWSS) are extracellular. A helical transmembrane segment spans residues 277–297 (LGGIVLCLTGAEAMFADLGHF). The Cytoplasmic portion of the chain corresponds to 298-303 (SKLSLR). Residues 304–324 (LGFTIVVYPCLVLAYMGEAAY) form a helical membrane-spanning segment. The Extracellular segment spans residues 325 to 343 (LSKHREDLQSSFYKALPDR). The chain crosses the membrane as a helical span at residues 344–364 (VFWPVLFIATLATAVGSQAII). The Cytoplasmic segment spans residues 365–395 (SATFSIISQCRALGCFPRIKVVHTSSHVHGQ). Residues 396–416 (IYIPEVNWVLMSLCLAVTIGF) traverse the membrane as a helical segment. At 417 to 424 (RDTEMIGN) the chain is on the extracellular side. The chain crosses the membrane as a helical span at residues 425 to 445 (AYGLAVILVMCATTCLMFLVI). At 446 to 451 (TTVWNR) the chain is on the cytoplasmic side. A helical membrane pass occupies residues 452–472 (WVVWAAAFTVVFGSVELLYLS). Over 473–477 (ACLAK) the chain is Extracellular. A helical transmembrane segment spans residues 478–498 (VPHGGWLPLLLSLTTLLVMST). The Cytoplasmic segment spans residues 499 to 778 (WHYGTAMKQQ…LIEVGMAYRV (280 aa)). The span at 655 to 677 (PATSSSGGSNQHAFDAGTTTSSC) shows a compositional bias: polar residues. The disordered stretch occupies residues 655–704 (PATSSSGGSNQHAFDAGTTTSSCEIDATAGGGGRRKVRFDNDGGGGGEEE).

The protein belongs to the HAK/KUP transporter (TC 2.A.72.3) family.

It is found in the membrane. High-affinity potassium transporter. The polypeptide is Probable potassium transporter 13 (HAK13) (Oryza sativa subsp. japonica (Rice)).